Reading from the N-terminus, the 73-residue chain is uncharacterized protein (73 aa).

An N-terminal signal peptide occupies residues 1 to 23; the sequence is MLHLIKMVSKIVLLITLVFIVSA.

This is an uncharacterized protein from Acheta domesticus (House cricket).